Reading from the N-terminus, the 224-residue chain is Transcriptional regulatory protein DltR (224 aa).

A Response regulatory domain is found at arginine 2–threonine 116. Aspartate 51 is subject to 4-aspartylphosphate. Positions alanine 124–glutamate 222 form a DNA-binding region, ompR/PhoB-type.

In terms of processing, phosphorylated by DltS.

It localises to the cytoplasm. In terms of biological role, member of the two-component regulatory system DltS/DltR. Regulates the expression of the dlt operon. The chain is Transcriptional regulatory protein DltR (dltR) from Streptococcus agalactiae serotype III (strain NEM316).